The sequence spans 465 residues: Mitochondrial distribution and morphology protein 10 (465 aa).

This sequence belongs to the MDM10 family. Component of the ER-mitochondria encounter structure (ERMES) or MDM complex, composed of MMM1, MDM10, MDM12 and MDM34. Associates with the mitochondrial outer membrane sorting assembly machinery SAM(core) complex.

The protein localises to the mitochondrion outer membrane. Its function is as follows. Component of the ERMES/MDM complex, which serves as a molecular tether to connect the endoplasmic reticulum and mitochondria. Components of this complex are involved in the control of mitochondrial shape and protein biogenesis and may function in phospholipid exchange. MDM10 is involved in the late assembly steps of the general translocase of the mitochondrial outer membrane (TOM complex). Functions in the TOM40-specific route of the assembly of outer membrane beta-barrel proteins, including the association of TOM40 with the receptor TOM22 and small TOM proteins. Can associate with the SAM(core) complex as well as the MDM12-MMM1 complex, both involved in late steps of the major beta-barrel assembly pathway, that is responsible for biogenesis of all outer membrane beta-barrel proteins. May act as a switch that shuttles between both complexes and channels precursor proteins into the TOM40-specific pathway. Plays a role in mitochondrial morphology and in the inheritance of mitochondria. In Eremothecium gossypii (strain ATCC 10895 / CBS 109.51 / FGSC 9923 / NRRL Y-1056) (Yeast), this protein is Mitochondrial distribution and morphology protein 10.